Consider the following 321-residue polypeptide: Solute carrier family 25 member 33 (321 aa).

Solcar repeat units lie at residues 9–118, 126–213, and 231–315; these read ENTL…AKEQ, NSNI…LKKY, and TSFF…IVYL. 6 helical membrane passes run 12–32, 49–65, 121–141, 190–210, 233–253, and 298–318; these read LLHL…TCPL, VYYP…AGMV, GIFV…AAFI, LTAS…YESL, FFGL…IAYP, and QIPN…LLED.

This sequence belongs to the mitochondrial carrier (TC 2.A.29) family. Expressed in the central nervous system. Also expressed in testis and skeletal muscle. Weakly expressed in heart, liver, kidney, prostate, colon and peripheral blood leukocytes.

It is found in the mitochondrion inner membrane. It carries out the reaction UTP(in) + UDP(out) = UTP(out) + UDP(in). It catalyses the reaction dUTP(out) + UTP(in) = dUTP(in) + UTP(out). The catalysed reaction is 5-methyl-UTP(out) + UTP(in) = 5-methyl-UTP(in) + UTP(out). The enzyme catalyses 5-methyl-UDP(out) + UTP(in) = 5-methyl-UDP(in) + UTP(out). It carries out the reaction UTP(in) + CTP(out) = UTP(out) + CTP(in). It catalyses the reaction CDP(out) + UTP(in) = CDP(in) + UTP(out). The catalysed reaction is dCTP(out) + UTP(in) = dCTP(in) + UTP(out). The enzyme catalyses dCDP(out) + UTP(in) = dCDP(in) + UTP(out). It carries out the reaction UTP(in) + GTP(out) = UTP(out) + GTP(in). It catalyses the reaction UTP(in) + GDP(out) = UTP(out) + GDP(in). The catalysed reaction is dGTP(out) + UTP(in) = dGTP(in) + UTP(out). The enzyme catalyses dGDP(out) + UTP(in) = dGDP(in) + UTP(out). It carries out the reaction ITP(out) + UTP(in) = ITP(in) + UTP(out). Inhibited by pyridoxal 5'-phosphate, 4,7-diphenyl-1,10-phenanthroline, tannic acid, and mercurials (mercury dichloride, mersalyl acid, p-hydroxymercuribenzoate). Mitochondrial transporter that imports/exports pyrimidine nucleotides into and from mitochondria. Selectively transports uridine, thymidine, guanosine, cytosine and inosine (deoxy)nucleoside di- and triphosphates by an antiport mechanism. May import (deoxy)nucleoside triphosphates in exchange for intramitochondrial (deoxy)nucleoside diphosphates, thus providing precursors necessary for de novo synthesis of mitochondrial DNA and RNA while exporting products of their catabolism. Participates in mitochondrial genome maintenance, regulation of mitochondrial membrane potential and mitochondrial respiration. Upon INS or IGF1 stimulation regulates cell growth and proliferation by controlling mitochondrial DNA replication and transcription, the ratio of mitochondria-to nuclear-encoded components of the electron transport chain resulting in control of mitochondrial ROS production. Participates in dendritic cell endocytosis and may associate with mitochondrial oxidative phosphorylation. The protein is Solute carrier family 25 member 33 (SLC25A33) of Homo sapiens (Human).